Consider the following 198-residue polypeptide: Superoxide dismutase [Mn], mitochondrial (198 aa).

A Mn(2+)-binding site is contributed by His26. Tyr34 carries the 3'-nitrotyrosine modification. Residues Lys44 and Lys51 each carry the N6-acetyllysine; alternate modification. N6-succinyllysine; alternate occurs at positions 44 and 51. His74 provides a ligand contact to Mn(2+). At Lys90 the chain carries N6-acetyllysine. N6-acetyllysine; alternate occurs at positions 98 and 106. N6-succinyllysine; alternate occurs at positions 98 and 106. Residues Asp159 and His163 each contribute to the Mn(2+) site. At Lys178 the chain carries N6-acetyllysine.

It belongs to the iron/manganese superoxide dismutase family. As to quaternary structure, homotetramer. Mn(2+) serves as cofactor. In terms of processing, nitrated under oxidative stress. Nitration coupled with oxidation inhibits the catalytic activity. Acetylation at Lys-98 decreases enzymatic activity. Deacetylated by SIRT3 upon exposure to ionizing radiations or after long fasting. Post-translationally, polyubiquitinated; leading to proteasomal degradation. Deubiquitinated by USP36 which increases protein stability.

It is found in the mitochondrion matrix. The catalysed reaction is 2 superoxide + 2 H(+) = H2O2 + O2. Its function is as follows. Destroys superoxide anion radicals which are normally produced within the cells and which are toxic to biological systems. The chain is Superoxide dismutase [Mn], mitochondrial (SOD2) from Pan troglodytes (Chimpanzee).